The primary structure comprises 281 residues: Apulose-4-phosphate transketolase subunit A (281 aa).

This sequence belongs to the transketolase family. In terms of assembly, probable heterodimer composed of AptA and AptB. Thiamine diphosphate is required as a cofactor.

It carries out the reaction apulose 4-phosphate + D-glyceraldehyde 3-phosphate = D-xylulose 5-phosphate + dihydroxyacetone phosphate. The protein operates within carbohydrate metabolism. Functionally, involved in catabolism of D-apiose. Catalyzes the transfer of the glycolaldehyde group from apulose-4-phosphate to D-glyceraldehyde 3-phosphate, generating dihydroxyacetone phosphate and D-xylulose-5-phosphate. This chain is Apulose-4-phosphate transketolase subunit A, found in Phocaeicola vulgatus (strain ATCC 8482 / DSM 1447 / JCM 5826 / CCUG 4940 / NBRC 14291 / NCTC 11154) (Bacteroides vulgatus).